Here is a 217-residue protein sequence, read N- to C-terminus: MSGDGSCSYSAEEGIRELLQSAKAKFRESVDVAIKLSVADSKSGESIRGAVVLPKGLGREVRVAVFAKGEHAKQASSAGADVVGDEELIEEIKKGRRLDVDWCIATPDFMPQISAIAKILGPRGLMPNPKFGTVTLELAEMVGIIKSGQVKFKSDRYGIVHVKIGDIGFTPEDLLENFNAVVAAVQGLRPTTIKGSYVRGVFVNSTMGRSFRIAGTG.

This sequence belongs to the universal ribosomal protein uL1 family. In terms of assembly, part of the 50S ribosomal subunit.

Functionally, binds directly to 23S rRNA. The L1 stalk is quite mobile in the ribosome, and is involved in E site tRNA release. In terms of biological role, protein L1 is also a translational repressor protein, it controls the translation of the L11 operon by binding to its mRNA. The polypeptide is Large ribosomal subunit protein uL1 (Anaplasma marginale (strain St. Maries)).